We begin with the raw amino-acid sequence, 367 residues long: D-alanine--D-alanine ligase (367 aa).

The ATP-grasp domain maps to 148 to 357 (KMAFEQAGLP…FPELVDKLVQ (210 aa)). ATP is bound at residue 184 to 239 (EASLGYPCFVKPANLGSSVGISKVRSRQELEDALDNAANYDRRIIVEAGVVAREVE). Asp310, Glu324, and Asn326 together coordinate Mg(2+).

Belongs to the D-alanine--D-alanine ligase family. Requires Mg(2+) as cofactor. It depends on Mn(2+) as a cofactor.

It localises to the cytoplasm. It carries out the reaction 2 D-alanine + ATP = D-alanyl-D-alanine + ADP + phosphate + H(+). It participates in cell wall biogenesis; peptidoglycan biosynthesis. Its function is as follows. Cell wall formation. This is D-alanine--D-alanine ligase from Trichormus variabilis (strain ATCC 29413 / PCC 7937) (Anabaena variabilis).